We begin with the raw amino-acid sequence, 243 residues long: Orotidine 5'-phosphate decarboxylase (243 aa).

Substrate contacts are provided by residues D18, K39, 66 to 75, T130, R192, Q201, G221, and R222; that span reads DLKFHDIPTT. Residue K68 is the Proton donor of the active site.

Belongs to the OMP decarboxylase family. Type 1 subfamily. As to quaternary structure, homodimer.

The enzyme catalyses orotidine 5'-phosphate + H(+) = UMP + CO2. It participates in pyrimidine metabolism; UMP biosynthesis via de novo pathway; UMP from orotate: step 2/2. In terms of biological role, catalyzes the decarboxylation of orotidine 5'-monophosphate (OMP) to uridine 5'-monophosphate (UMP). The chain is Orotidine 5'-phosphate decarboxylase from Synechococcus sp. (strain CC9311).